We begin with the raw amino-acid sequence, 408 residues long: Phosphopentomutase (408 aa).

Residues Asp-10, Asp-307, His-312, Asp-348, His-349, and His-360 each coordinate Mn(2+).

This sequence belongs to the phosphopentomutase family. Mn(2+) is required as a cofactor.

It localises to the cytoplasm. It carries out the reaction 2-deoxy-alpha-D-ribose 1-phosphate = 2-deoxy-D-ribose 5-phosphate. It catalyses the reaction alpha-D-ribose 1-phosphate = D-ribose 5-phosphate. Its pathway is carbohydrate degradation; 2-deoxy-D-ribose 1-phosphate degradation; D-glyceraldehyde 3-phosphate and acetaldehyde from 2-deoxy-alpha-D-ribose 1-phosphate: step 1/2. Isomerase that catalyzes the conversion of deoxy-ribose 1-phosphate (dRib-1-P) and ribose 1-phosphate (Rib-1-P) to deoxy-ribose 5-phosphate (dRib-5-P) and ribose 5-phosphate (Rib-5-P), respectively. The sequence is that of Phosphopentomutase from Proteus mirabilis (strain HI4320).